A 277-amino-acid chain; its full sequence is uncharacterized protein (277 aa).

Residues 139–167 (TARELSLDCSCPDYAVPCKHLAATFYLLA) form an SWIM-type zinc finger.

This is an uncharacterized protein from Mycobacterium tuberculosis (strain ATCC 25618 / H37Rv).